The chain runs to 197 residues: Adenylate kinase (197 aa).

19–24 (GSGKGT) contacts ATP. The segment at 39-68 (SSGDLLRAEVQSGSPKGKELKAMMERGELV) is NMP. Residues Ser-40, Arg-45, 66–68 (ELV), 95–98 (RYPR), and Gln-102 each bind AMP. The segment at 132-142 (KRAETSNRVDD) is LID. Arg-133 lines the ATP pocket. 2 residues coordinate AMP: Arg-139 and Arg-150. Gly-178 is a binding site for ATP.

This sequence belongs to the adenylate kinase family. Monomer.

The protein localises to the cytoplasm. It carries out the reaction AMP + ATP = 2 ADP. Functionally, catalyzes the reversible transfer of the terminal phosphate group between ATP and AMP. Plays an important role in cellular energy homeostasis and in adenine nucleotide metabolism. The polypeptide is Adenylate kinase (Schistosoma mansoni (Blood fluke)).